A 178-amino-acid chain; its full sequence is Cysteine-rich venom protein VAR3 (178 aa).

Residues Met1–Ser22 form the signal peptide. The SCP domain maps to Asn41–Tyr169. 3 disulfides stabilise this stretch: Cys77-Cys156, Cys95-Cys170, and Cys151-Cys167.

The protein belongs to the CRISP family. In terms of processing, contains 8 disulfide bonds. In terms of tissue distribution, expressed by the venom gland.

It is found in the secreted. Blocks ryanodine receptors, and potassium channels. The sequence is that of Cysteine-rich venom protein VAR3 from Varanus acanthurus (Ridge-tailed monitor).